The following is a 752-amino-acid chain: MAP/microtubule affinity-regulating kinase 4 (752 aa).

The interval 1–36 (MSSRTALAPGNDRNSDTHGTLGSGRSSDKGPSWSSR) is disordered. The region spanning 59 to 310 (YRLLRTIGKG…LEQIMKDKWI (252 aa)) is the Protein kinase domain. ATP-binding positions include 65 to 73 (IGKGNFAKV) and Lys-88. The active-site Proton acceptor is Asp-181. A Phosphothreonine; by LKB1 modification is found at Thr-214. The UBA domain occupies 324–368 (EPEEDFGDTKRIEVMVGMGYTREEIKEALTNQKYNEVTATYLLLG). The segment at 385–615 (ARVRAPSDTT…SGRPRPTTNL (231 aa)) is disordered. Over residues 391–406 (SDTTNGTSSSKGSSHN) the composition is skewed to low complexity. Phosphoserine is present on residues Ser-423 and Ser-543. Residues 544 to 553 (PSSHSLAPPS) show a composition bias toward low complexity. The KA1 domain occupies 703-752 (AGGPEPLSHFEVEVCQLPRPGLRGVLFRRVAGTALAFRTLVTRISNDLEL).

This sequence belongs to the protein kinase superfamily. CAMK Ser/Thr protein kinase family. SNF1 subfamily. Interacts with MAPT/TAU. Interacts with gamma-tubulin. Interacts with ODF2. Interacts with USP9X. Interacts with YWHAQ. Interacts with NLRP3; promoting NLRP3 recruitment to microtubule organizing center (MTOC). It depends on Mg(2+) as a cofactor. Ubiquitinated with 'Lys-29'- and 'Lys-33'-linked polyubiquitins which appear to impede LKB1-mediated phosphorylation. Deubiquitinated by USP9X. In terms of processing, phosphorylated at Thr-214 by STK11/LKB1 in complex with STE20-related adapter-alpha (STRADA) pseudo kinase and CAB39. Phosphorylated throughout the cell cycle. As to expression, isoform 1 and isoform 2 show similar expression patterns in the central nervous system and are present in the same subsets of neurons including pyramidal and non-pyramidal neurons in the cerebral cortex and hippocampus, cerebellar Purkinje cells, and interneurons and motor neurons in the spinal cord but not in glial cells (at protein level). Isoform 2 is the major isoform in brain and cerebellum. Also expressed in spleen, liver, small intestine, colon, kidney, tongue, testis and lung. Isoform 1 and isoform 2 are expressed at similar levels in heart.

It localises to the cytoplasm. The protein localises to the cytoskeleton. Its subcellular location is the microtubule organizing center. It is found in the centrosome. The protein resides in the cilium axoneme. It localises to the cilium basal body. The protein localises to the cell projection. Its subcellular location is the dendrite. It catalyses the reaction L-seryl-[protein] + ATP = O-phospho-L-seryl-[protein] + ADP + H(+). The catalysed reaction is L-threonyl-[protein] + ATP = O-phospho-L-threonyl-[protein] + ADP + H(+). With respect to regulation, activated by phosphorylation on Thr-214. Functionally, serine/threonine-protein kinase. Phosphorylates the microtubule-associated protein MAPT/TAU. Also phosphorylates the microtubule-associated proteins MAP2 and MAP4. Involved in regulation of the microtubule network, causing reorganization of microtubules into bundles. Required for the initiation of axoneme extension during cilium assembly. Regulates the centrosomal location of ODF2 and phosphorylates ODF2 in vitro. Plays a role in cell cycle progression, specifically in the G1/S checkpoint. Reduces neuronal cell survival. Plays a role in energy homeostasis by regulating satiety and metabolic rate. Promotes adipogenesis by activating JNK1 and inhibiting the p38MAPK pathway, and triggers apoptosis by activating the JNK1 pathway. Phosphorylates mTORC1 complex member RPTOR and acts as a negative regulator of the mTORC1 complex, probably due to disruption of the interaction between phosphorylated RPTOR and the RRAGA/RRAGC heterodimer which is required for mTORC1 activation. Involved in NLRP3 positioning along microtubules by mediating NLRP3 recruitment to microtubule organizing center (MTOC) upon inflammasome activation. The polypeptide is MAP/microtubule affinity-regulating kinase 4 (Mus musculus (Mouse)).